A 276-amino-acid chain; its full sequence is Diaminopimelate epimerase (276 aa).

Substrate-binding residues include Asn-13, Gln-46, and Asn-66. Residue Cys-75 is the Proton donor of the active site. Substrate contacts are provided by residues 76–77, Asn-159, Asn-192, and 210–211; these read GN and ER. Cys-219 (proton acceptor) is an active-site residue. Substrate is bound at residue 220–221; the sequence is GT.

It belongs to the diaminopimelate epimerase family. As to quaternary structure, homodimer.

It localises to the cytoplasm. It catalyses the reaction (2S,6S)-2,6-diaminopimelate = meso-2,6-diaminopimelate. The protein operates within amino-acid biosynthesis; L-lysine biosynthesis via DAP pathway; DL-2,6-diaminopimelate from LL-2,6-diaminopimelate: step 1/1. Catalyzes the stereoinversion of LL-2,6-diaminopimelate (L,L-DAP) to meso-diaminopimelate (meso-DAP), a precursor of L-lysine and an essential component of the bacterial peptidoglycan. In Pseudomonas putida (strain GB-1), this protein is Diaminopimelate epimerase.